The following is a 256-amino-acid chain: Probable hydroxyacylglutathione hydrolase glo2 (256 aa).

Residues His-63, His-65, Asp-67, His-68, His-118, and Asp-139 each coordinate Zn(2+). Residues Arg-148, 178-180, and 250-253 contribute to the substrate site; these read HEY and RDMK. His-178 serves as a coordination point for Zn(2+).

The protein belongs to the metallo-beta-lactamase superfamily. Glyoxalase II family. The cofactor is Zn(2+).

The protein resides in the cytoplasm. It localises to the nucleus. The enzyme catalyses an S-(2-hydroxyacyl)glutathione + H2O = a 2-hydroxy carboxylate + glutathione + H(+). The catalysed reaction is (R)-S-lactoylglutathione + H2O = (R)-lactate + glutathione + H(+). It participates in secondary metabolite metabolism; methylglyoxal degradation; (R)-lactate from methylglyoxal: step 2/2. In terms of biological role, thiolesterase that catalyzes the hydrolysis of S-D-lactoylglutathione to form glutathione and D-lactic acid. Involved in the metabolism of methylglyoxal, a toxic compound for yeast proliferation, by converting methylglyoxal to lactate via S-D-lactoylglutathione by sequential enzyme reactions catalyzed by glyoxalase I and glyoxalase II. The polypeptide is Probable hydroxyacylglutathione hydrolase glo2 (glo2) (Schizosaccharomyces pombe (strain 972 / ATCC 24843) (Fission yeast)).